A 379-amino-acid chain; its full sequence is Cytochrome b (379 aa).

4 helical membrane passes run 33–53 (FGSL…FLAM), 77–98 (WTIR…FIHV), 113–133 (WNVG…GYVL), and 178–198 (FFAL…IHLL). Positions 83 and 97 each coordinate heme b. Residues histidine 182 and histidine 196 each contribute to the heme b site. Histidine 201 is a binding site for a ubiquinone. Helical transmembrane passes span 226-246 (TKDF…ALFY), 288-308 (LGGV…PFLQ), 320-340 (LSQF…WIGG), and 347-367 (FINI…FIMP).

The protein belongs to the cytochrome b family. In terms of assembly, the cytochrome bc1 complex contains 11 subunits: 3 respiratory subunits (MT-CYB, CYC1 and UQCRFS1), 2 core proteins (UQCRC1 and UQCRC2) and 6 low-molecular weight proteins (UQCRH/QCR6, UQCRB/QCR7, UQCRQ/QCR8, UQCR10/QCR9, UQCR11/QCR10 and a cleavage product of UQCRFS1). This cytochrome bc1 complex then forms a dimer. The cofactor is heme b.

It localises to the mitochondrion inner membrane. Functionally, component of the ubiquinol-cytochrome c reductase complex (complex III or cytochrome b-c1 complex) that is part of the mitochondrial respiratory chain. The b-c1 complex mediates electron transfer from ubiquinol to cytochrome c. Contributes to the generation of a proton gradient across the mitochondrial membrane that is then used for ATP synthesis. In Lepilemur dorsalis (Grey-backed sportive lemur), this protein is Cytochrome b (MT-CYB).